A 441-amino-acid chain; its full sequence is MQKQVKISGKSKENMSLLKHLKGDVQGKELVIEDSIVNERWKQVLKEKIDIEHDLFNYQKNREISKVPFLPVDRLITNDEVEDILNTLTEVLPTGKFTSGPYLEQFEKVLSTYLHKRYVIATSSGTDAIMIGLLALGLNPGDEVIMPANSFSATENAVLASGGVPIYVDINPQTFCIDPDKIEEAITPYTKFILPVHLYGKHSDMQHIRQIANRYKLKVIEDACQGIGLTDLGKYADITTLSFNPYKNFGVCGKAGAIATDNEELAKKCIQFSYHGFEVNVKNKKVINFGFNSKMDNLQAAIGLERMKYLSLNNFKRLFLADRYITQLAELQNKGYIELPELSEDHVWHLFPIKVRTEDRADIMTKLNEDFGVQTDVYYPILSHMQKTPLVQDKYAGLQLVHTEKAHSQVLHLPLYPSFTLEEQDRVMEGLFHVIKQEIGV.

Substrate is bound at residue 98–99 (TS). 125–126 (GT) contacts pyridoxal 5'-phosphate. Phe151 serves as a coordination point for substrate. Positions 225 and 242 each coordinate pyridoxal 5'-phosphate. Residue 244–246 (NPY) participates in substrate binding. At Lys247 the chain carries N6-(pyridoxal phosphate)lysine. Tyr274 and Lys282 together coordinate substrate. Residue Asn292 participates in pyridoxal 5'-phosphate binding. Tyr379 serves as a coordination point for substrate.

This sequence belongs to the DegT/DnrJ/EryC1 family. As to quaternary structure, homodimer. The cofactor is pyridoxal 5'-phosphate.

It catalyses the reaction 3-dehydro-D-glucose 6-phosphate + L-glutamate = D-kanosamine 6-phosphate + 2-oxoglutarate. It participates in antibiotic biosynthesis; kanosamine biosynthesis. Involved in the biosynthesis of kanosamine (3-amino-3-deoxy-D-glucose), which is known to have antibiotic and antifungal properties, and to be a precursor of the antibiotic neotrehalosadiamine (3,3'-diamino-3,3'-dideoxy-alpha,beta-trehalose (NTD)). Catalyzes the reversible pyridoxal phosphate-dependent transamination of 3-dehydro-alpha-D-glucose 6-phosphate to form alpha-D-kanosamine-6-phosphate. It can only use alpha-anomer and glutamate is the only amino donor. The polypeptide is 3-oxo-glucose-6-phosphate:glutamate aminotransferase (ntdA) (Bacillus subtilis (strain 168)).